Consider the following 371-residue polypeptide: Protein NDRG2 (371 aa).

Positions 1–21 (MAELQEVQITEEKPLLPGQTP) are disordered. Residue Ala-2 is modified to N-acetylalanine. Residue Thr-20 is modified to Phosphothreonine. Phosphoserine occurs at positions 326 and 328. A Phosphothreonine modification is found at Thr-330. Position 332 is a phosphoserine (Ser-332). Thr-334 carries the phosphothreonine modification. A disordered region spans residues 334–371 (TSAASVDGNRSRSRTLSQSSESGTLSSGPPGHTMEVSC). 3 positions are modified to phosphoserine: Ser-335, Ser-338, and Ser-344. The segment covering 347–361 (RTLSQSSESGTLSSG) has biased composition (low complexity). Residue Thr-348 is modified to Phosphothreonine. 4 positions are modified to phosphoserine: Ser-350, Ser-352, Ser-353, and Ser-355. Thr-357 carries the post-translational modification Phosphothreonine. Ser-370 is subject to Phosphoserine.

This sequence belongs to the NDRG family. Interacts with CTNNB1. Highly expressed in brain, heart, skeletal muscle and salivary gland, and moderately in kidney and liver. Expressed in dendritic cells, but not in other blood cells. Expression levels are low in pancreatic and liver cancer tissues; absent in meningioma. Expressed in low-grade gliomas but present at low levels in glioblastoma. Isoform 1 and isoform 2 are present in brain neurons and up-regulated in Alzheimer disease (at protein level).

The protein localises to the cytoplasm. Its subcellular location is the perinuclear region. The protein resides in the cell projection. It localises to the growth cone. Functionally, contributes to the regulation of the Wnt signaling pathway. Down-regulates CTNNB1-mediated transcriptional activation of target genes, such as CCND1, and may thereby act as tumor suppressor. May be involved in dendritic cell and neuron differentiation. The protein is Protein NDRG2 (NDRG2) of Homo sapiens (Human).